The sequence spans 588 residues: Pectinesterase 4 (588 aa).

The N-terminal stretch at 1–24 (MIGKVVVSVASILLIVGVAIGVVA) is a signal peptide. N-linked (GlcNAc...) asparagine glycosylation is found at Asn-86, Asn-206, and Asn-342. Residues Thr-353 and Gln-383 each contribute to the substrate site. Residue Asp-406 is the Proton donor of the active site. Asp-427 serves as the catalytic Nucleophile. Residues Arg-496 and Trp-498 each coordinate substrate.

This sequence in the N-terminal section; belongs to the PMEI family. It in the C-terminal section; belongs to the pectinesterase family. Expressed in pollen grains and pollen tubes.

It is found in the secreted. Its subcellular location is the cell wall. The catalysed reaction is [(1-&gt;4)-alpha-D-galacturonosyl methyl ester](n) + n H2O = [(1-&gt;4)-alpha-D-galacturonosyl](n) + n methanol + n H(+). The protein operates within glycan metabolism; pectin degradation; 2-dehydro-3-deoxy-D-gluconate from pectin: step 1/5. Functionally, acts in the modification of cell walls via demethylesterification of cell wall pectin. Plays an important role in growth of pollen tubes in female floral tissues, possibly via enhancing the interaction between the pollen tube and female floral tissues by modification of the cell walls. This chain is Pectinesterase 4 (PME4), found in Arabidopsis thaliana (Mouse-ear cress).